A 173-amino-acid chain; its full sequence is Myosin light chain 5 (173 aa).

Residues 1–22 (MASRKTKKKEGGGLRAQRASSN) are disordered. EF-hand domains are found at residues 30–65 (TQIQ…LGKT), 100–135 (DAEE…QADK), and 136–171 (MTAE…GEEK). Ca(2+)-binding residues include D43, N45, D47, and D54.

As to quaternary structure, myosin is a hexamer of 2 heavy chains and 4 light chains. As to expression, jaw-closing muscles.

This chain is Myosin light chain 5 (MYL5), found in Felis catus (Cat).